The following is a 541-amino-acid chain: Putative asparagine synthetase [glutamine-hydrolyzing] 1 (541 aa).

Residue Cys2 is the For GATase activity of the active site. Positions 2 to 213 constitute a Glutamine amidotransferase type-2 domain; sequence CSISGIIVKD…PNSQLIYYLD (212 aa). L-glutamine-binding positions include 68-72, 92-94, and Asp116; these read RLAIV and NGE. Residues Val289 and 363 to 364 contribute to the ATP site; that span reads SG.

The protein belongs to the asparagine synthetase family.

The enzyme catalyses L-aspartate + L-glutamine + ATP + H2O = L-asparagine + L-glutamate + AMP + diphosphate + H(+). It participates in amino-acid biosynthesis; L-asparagine biosynthesis; L-asparagine from L-aspartate (L-Gln route): step 1/1. The sequence is that of Putative asparagine synthetase [glutamine-hydrolyzing] 1 from Methanocaldococcus jannaschii (strain ATCC 43067 / DSM 2661 / JAL-1 / JCM 10045 / NBRC 100440) (Methanococcus jannaschii).